Reading from the N-terminus, the 296-residue chain is Probable endonuclease 4 (296 aa).

The Zn(2+) site is built by His68, His109, Glu144, Asp178, His181, His213, Asp226, His228, and Glu258.

This sequence belongs to the AP endonuclease 2 family. Requires Zn(2+) as cofactor.

It catalyses the reaction Endonucleolytic cleavage to 5'-phosphooligonucleotide end-products.. In terms of biological role, endonuclease IV plays a role in DNA repair. It cleaves phosphodiester bonds at apurinic or apyrimidinic (AP) sites, generating a 3'-hydroxyl group and a 5'-terminal sugar phosphate. In Staphylococcus epidermidis (strain ATCC 35984 / DSM 28319 / BCRC 17069 / CCUG 31568 / BM 3577 / RP62A), this protein is Probable endonuclease 4.